The primary structure comprises 241 residues: Leucyl/phenylalanyl-tRNA--protein transferase (241 aa).

The protein belongs to the L/F-transferase family.

It localises to the cytoplasm. The enzyme catalyses N-terminal L-lysyl-[protein] + L-leucyl-tRNA(Leu) = N-terminal L-leucyl-L-lysyl-[protein] + tRNA(Leu) + H(+). It carries out the reaction N-terminal L-arginyl-[protein] + L-leucyl-tRNA(Leu) = N-terminal L-leucyl-L-arginyl-[protein] + tRNA(Leu) + H(+). It catalyses the reaction L-phenylalanyl-tRNA(Phe) + an N-terminal L-alpha-aminoacyl-[protein] = an N-terminal L-phenylalanyl-L-alpha-aminoacyl-[protein] + tRNA(Phe). Its function is as follows. Functions in the N-end rule pathway of protein degradation where it conjugates Leu, Phe and, less efficiently, Met from aminoacyl-tRNAs to the N-termini of proteins containing an N-terminal arginine or lysine. This Colwellia psychrerythraea (strain 34H / ATCC BAA-681) (Vibrio psychroerythus) protein is Leucyl/phenylalanyl-tRNA--protein transferase.